Reading from the N-terminus, the 152-residue chain is Putative pre-16S rRNA nuclease (152 aa).

This sequence belongs to the YqgF nuclease family.

The protein localises to the cytoplasm. Functionally, could be a nuclease involved in processing of the 5'-end of pre-16S rRNA. The polypeptide is Putative pre-16S rRNA nuclease (Sphingopyxis alaskensis (strain DSM 13593 / LMG 18877 / RB2256) (Sphingomonas alaskensis)).